The chain runs to 406 residues: Putative sodium-coupled neutral amino acid transporter 11 (406 aa).

Topologically, residues 1-7 are cytoplasmic; that stretch reads MKQAGFP. The chain crosses the membrane as a helical span at residues 8 to 28; it reads LGILLLFWVSYVTDFSLVLLI. N44 is a glycosylation site (N-linked (GlcNAc...) asparagine). Helical transmembrane passes span 48-68, 93-113, 121-141, 156-176, 202-222, and 241-263; these read GFPG…IAMI, VFIG…LPLS, LGKV…IVMA, AWVF…FAFI, MSIV…YLTF, and VTFG…CFVT. An N-linked (GlcNAc...) asparagine glycan is attached at N275. Helical transmembrane passes span 279–299, 301–321, and 340–360; these read VFHI…SLLI, CLGI…IFII, and IMSC…FVMA.

It belongs to the amino acid/polyamine transporter 2 family.

It localises to the membrane. In terms of biological role, putative sodium-dependent amino acid/proton antiporter. The sequence is that of Putative sodium-coupled neutral amino acid transporter 11 (SLC38A11) from Homo sapiens (Human).